Here is a 205-residue protein sequence, read N- to C-terminus: Methylthioribulose-1-phosphate dehydratase (205 aa).

2 residues coordinate Zn(2+): His-95 and His-97.

This sequence belongs to the aldolase class II family. MtnB subfamily. The cofactor is Zn(2+).

The catalysed reaction is 5-(methylsulfanyl)-D-ribulose 1-phosphate = 5-methylsulfanyl-2,3-dioxopentyl phosphate + H2O. It functions in the pathway amino-acid biosynthesis; L-methionine biosynthesis via salvage pathway; L-methionine from S-methyl-5-thio-alpha-D-ribose 1-phosphate: step 2/6. In terms of biological role, catalyzes the dehydration of methylthioribulose-1-phosphate (MTRu-1-P) into 2,3-diketo-5-methylthiopentyl-1-phosphate (DK-MTP-1-P). The protein is Methylthioribulose-1-phosphate dehydratase of Microcystis aeruginosa (strain NIES-843 / IAM M-2473).